The chain runs to 553 residues: Thioredoxin domain-containing protein 2 (553 aa).

2 disordered regions span residues 1 to 37 (MDVD…DANE) and 77 to 442 (TEES…EETM). Positions 99-143 (PKQDDSPKSSEETIQPKEGDIPKAPEETIQSKKEDLPKSSEKAIQ) are enriched in basic and acidic residues. 22 consecutive repeat copies span residues 113–127 (QPKE…EETI), 128–142 (QSKK…EKAI), 143–157 (QPKE…AKPI), 158–172 (QPKL…VKPS), 173–187 (QPKE…EETI), 188–202 (QSKK…EEAI), 203–217 (QPKE…AKPI), 218–232 (QPKL…VKPS), 233–247 (QPKE…EETI), 248–262 (QPKE…AKPI), 263–277 (QPKL…VKPS), 278–292 (QPKE…EEAI), 293–307 (QPKE…EEAI), 308–322 (QPKE…EEAI), 323–337 (QPKE…EEAI), 338–352 (QPKE…EETI), 353–367 (QPKK…EEAI), 368–382 (QPKE…KQAI), 383–397 (QPKE…EEAI), 398–412 (PPKE…EETI), 413–427 (QPKE…EEAT), and 428–442 (PSKE…EETM). The interval 113-442 (QPKEGDIPKA…DILKPEEETM (330 aa)) is 22 X 15 AA approximate tandem repeat of Q-P-K-X-G-D-I-P-K-S-[PS]-E-[KE]-X-I. Residues 173 to 209 (QPKEGDIPKAPEETIQSKKEDLPKSSEEAIQPKEGDI) are compositionally biased toward basic and acidic residues. Positions 233–254 (QPKESDIPKSPEETIQPKEGDI) are enriched in basic and acidic residues. Composition is skewed to basic and acidic residues over residues 278-376 (QPKE…DIPK) and 385-439 (KEGD…KPEE). Ser362 carries the post-translational modification Phosphoserine. Ser392 is subject to Phosphoserine. The region spanning 429–553 (SKEGDILKPE…KLEAVIAELK (125 aa)) is the Thioredoxin domain. A disulfide bond links Cys480 and Cys483.

As to expression, testis-specific. Only expressed during spermiogenesis, prominently in round and elongating spermatids.

The protein resides in the cytoplasm. Its function is as follows. Probably plays a regulatory role in sperm development. May participate in regulation of fibrous sheath (FS) assembly by supporting the formation of disulfide bonds during sperm tail morphogenesis. May also be required to rectify incorrect disulfide pairing and generate suitable pairs between the FS constituents. Can reduce disulfide bonds in vitro in the presence of NADP and thioredoxin reductase. The chain is Thioredoxin domain-containing protein 2 (TXNDC2) from Homo sapiens (Human).